The primary structure comprises 508 residues: Methionine--tRNA ligase (508 aa).

Residues 12 to 22 (YYVNDVAHIGH) carry the 'HIGH' region motif. The short motif at 295–299 (KISKS) is the 'KMSKS' region element. Position 298 (lysine 298) interacts with ATP.

Belongs to the class-I aminoacyl-tRNA synthetase family. MetG type 2B subfamily. In terms of assembly, monomer.

It localises to the cytoplasm. The enzyme catalyses tRNA(Met) + L-methionine + ATP = L-methionyl-tRNA(Met) + AMP + diphosphate. In terms of biological role, is required not only for elongation of protein synthesis but also for the initiation of all mRNA translation through initiator tRNA(fMet) aminoacylation. In Rickettsia prowazekii (strain Madrid E), this protein is Methionine--tRNA ligase (metG).